The following is a 719-amino-acid chain: Polyribonucleotide nucleotidyltransferase (719 aa).

Residues Asp507 and Asp513 each coordinate Mg(2+). Residues 573–633 (PKLELFSVDP…EQIKAAKDYI (61 aa)) form the KH domain. An S1 motif domain is found at 658–719 (GQEFQGIVKK…NGKISVDLCE (62 aa)).

The protein belongs to the polyribonucleotide nucleotidyltransferase family. Requires Mg(2+) as cofactor.

Its subcellular location is the cytoplasm. It catalyses the reaction RNA(n+1) + phosphate = RNA(n) + a ribonucleoside 5'-diphosphate. Its function is as follows. Involved in mRNA degradation. Catalyzes the phosphorolysis of single-stranded polyribonucleotides processively in the 3'- to 5'-direction. The chain is Polyribonucleotide nucleotidyltransferase from Campylobacter jejuni subsp. jejuni serotype O:2 (strain ATCC 700819 / NCTC 11168).